The chain runs to 473 residues: Photosystem II CP43 reaction center protein (473 aa).

The propeptide occupies methionine 1–glutamate 14. At threonine 15 the chain carries N-acetylthreonine. Threonine 15 carries the post-translational modification Phosphothreonine. Helical transmembrane passes span leucine 69–alanine 93, leucine 134–asparagine 155, lysine 178–threonine 200, lysine 255–serine 275, and tryptophan 291–alanine 312. Glutamate 367 contacts [CaMn4O5] cluster. Residues arginine 447–proline 471 form a helical membrane-spanning segment.

It belongs to the PsbB/PsbC family. PsbC subfamily. In terms of assembly, PSII is composed of 1 copy each of membrane proteins PsbA, PsbB, PsbC, PsbD, PsbE, PsbF, PsbH, PsbI, PsbJ, PsbK, PsbL, PsbM, PsbT, PsbX, PsbY, PsbZ, Psb30/Ycf12, at least 3 peripheral proteins of the oxygen-evolving complex and a large number of cofactors. It forms dimeric complexes. The cofactor is Binds multiple chlorophylls and provides some of the ligands for the Ca-4Mn-5O cluster of the oxygen-evolving complex. It may also provide a ligand for a Cl- that is required for oxygen evolution. PSII binds additional chlorophylls, carotenoids and specific lipids..

The protein localises to the plastid. It is found in the chloroplast thylakoid membrane. Functionally, one of the components of the core complex of photosystem II (PSII). It binds chlorophyll and helps catalyze the primary light-induced photochemical processes of PSII. PSII is a light-driven water:plastoquinone oxidoreductase, using light energy to abstract electrons from H(2)O, generating O(2) and a proton gradient subsequently used for ATP formation. This Carica papaya (Papaya) protein is Photosystem II CP43 reaction center protein.